The chain runs to 702 residues: MNSLFASTARGLEELLKIELEKLGAVGCQVVQGGVHFQGDTRLIYQSLMWSRLASRIILPMGECKVYSDLDLYFGVQAINWTEIFNPGATFAVHFSGLNDTIRNSQYGAMKVKDAIVDAFTRKNLPRPNVDRESPDLRINVWLNKETASIALDLSGDGLHLRGYRDRTGLAPIKETLAAAIVMRSGWQPGTPLLDPMCGSGTLLIEAAMWATDRAPGLHRGHWGFSGWAQHDEAIWQEVKAEAQTRARKGLAEYSSHFYGSDSDARVIERARSNARRAGIGELITFEVKDVAQLSNPLPKGPYGTVISNPPYGERLDSDPALIALHSLLGRTMKNQFGGWNLSLFSASPDLLGSLQLRADKQFKAKNGPLDCVQKNYHIAETTADSKPATVAEDYANRLRKNLKKLEKWARQEGIECYRLYDADLPEYNVAVDRYGDWAVIQEYAPPKTVDAQKARQRLFDIIAATLSVLGIPPNKLVLKTRERQKGKNQYQKMSEKGEFLEVSEYNARLWVNLTDYLDTGLFLDHRIARRMLGEMSKGKDFLNLFSYTGSASVHAGLGGARNTTTVDMSRTYLEWAERNLRLNGLSGRAHRLIQADCLGWLREANEQFDLIFIDPPTFSNSKRMEESFDVQRDHVALMKDLKRLLRKGGTIMFSNNKRGFRMDLEGLAELGLTAQEITQKTLSPDFARNRQIHNCWLIRAA.

The region spanning 43–154 is the THUMP domain; that stretch reads LIYQSLMWSR…KETASIALDL (112 aa).

Belongs to the methyltransferase superfamily. RlmKL family.

It localises to the cytoplasm. The catalysed reaction is guanosine(2445) in 23S rRNA + S-adenosyl-L-methionine = N(2)-methylguanosine(2445) in 23S rRNA + S-adenosyl-L-homocysteine + H(+). It carries out the reaction guanosine(2069) in 23S rRNA + S-adenosyl-L-methionine = N(2)-methylguanosine(2069) in 23S rRNA + S-adenosyl-L-homocysteine + H(+). Its function is as follows. Specifically methylates the guanine in position 2445 (m2G2445) and the guanine in position 2069 (m7G2069) of 23S rRNA. The polypeptide is Ribosomal RNA large subunit methyltransferase K/L (Salmonella typhi).